The chain runs to 311 residues: Beta-lactamase (311 aa).

The segment at residues 1 to 36 (MRKPTSSLTRRSVLGAGLGLGGALALGSTTASAASA) is a signal peptide (tat-type signal). Catalysis depends on Ser-86, which acts as the Acyl-ester intermediate. 252–254 (KSG) serves as a coordination point for substrate.

The protein belongs to the class-A beta-lactamase family. Post-translationally, predicted to be exported by the Tat system. The position of the signal peptide cleavage has not been experimentally proven.

The enzyme catalyses a beta-lactam + H2O = a substituted beta-amino acid. Hydrolyzes benzylpenicillin and cloxacillin (at 10% of the rate of benzylpenicillin). This Streptomyces cellulosae protein is Beta-lactamase (bla).